A 20-amino-acid chain; its full sequence is Alpha-amylase (20 aa).

The catalysed reaction is Endohydrolysis of (1-&gt;4)-alpha-D-glucosidic linkages in polysaccharides containing three or more (1-&gt;4)-alpha-linked D-glucose units.. Its activity is regulated as follows. Strongly inhibited by Hg (2+). Inhibited by Zn (2+). Activated by Fe (2+), Mg (2+) and Ba (2+). Alpha-amylase active towards amylose, starch, amylopectin and maltodextrins. Has lower activity towards glycogen, and is not active towards alpha/beta-cyclodextrin. The chain is Alpha-amylase from Bacillus sp.